We begin with the raw amino-acid sequence, 1120 residues long: Cluster 41 polyketide synthase (1120 aa).

Residues 7–430 (PHDVAVVGMG…GTVSHAIIEK (424 aa)) enclose the Ketosynthase family 3 (KS3) domain. Catalysis depends on for beta-ketoacyl synthase activity residues cysteine 178, histidine 313, and histidine 353. The tract at residues 539-796 (VWVFSGHGAQ…TSAISAAAED (258 aa)) is malonyl-CoA:ACP transacylase (MAT) domain. The active-site For acyl/malonyl transferase activity is the serine 625. Residues 804–943 (IKKILSMESR…IAMQWTSWRE (140 aa)) are ketoreductase (KR) domain. The 75-residue stretch at 1042 to 1116 (DSLSRQVREC…HIVKWLMEKT (75 aa)) folds into the Carrier domain. The residue at position 1076 (serine 1076) is an O-(pantetheine 4'-phosphoryl)serine.

Polyketide synthase; part of the gene cluster 41 that mediates the biosynthesis of an extracellular and diffusible metabolite that is able to stimulate colony sclerotial production. In Aspergillus flavus (strain ATCC 200026 / FGSC A1120 / IAM 13836 / NRRL 3357 / JCM 12722 / SRRC 167), this protein is Cluster 41 polyketide synthase.